Reading from the N-terminus, the 303-residue chain is Signal recognition particle receptor FtsY (303 aa).

GTP contacts are provided by residues 108–115 (GVNGAGKT), 190–194 (DTAGR), and 254–257 (TKLD).

The protein belongs to the GTP-binding SRP family. FtsY subfamily. As to quaternary structure, part of the signal recognition particle protein translocation system, which is composed of SRP and FtsY. SRP is a ribonucleoprotein composed of Ffh and a 4.5S RNA molecule.

It is found in the cell inner membrane. Its subcellular location is the cytoplasm. The enzyme catalyses GTP + H2O = GDP + phosphate + H(+). Involved in targeting and insertion of nascent membrane proteins into the cytoplasmic membrane. Acts as a receptor for the complex formed by the signal recognition particle (SRP) and the ribosome-nascent chain (RNC). Interaction with SRP-RNC leads to the transfer of the RNC complex to the Sec translocase for insertion into the membrane, the hydrolysis of GTP by both Ffh and FtsY, and the dissociation of the SRP-FtsY complex into the individual components. In Rickettsia conorii (strain ATCC VR-613 / Malish 7), this protein is Signal recognition particle receptor FtsY.